An 811-amino-acid chain; its full sequence is Probable phosphoketolase (811 aa).

This sequence belongs to the XFP family. Requires thiamine diphosphate as cofactor.

This chain is Probable phosphoketolase, found in Methylococcus capsulatus (strain ATCC 33009 / NCIMB 11132 / Bath).